Reading from the N-terminus, the 830-residue chain is Interleukin-4 receptor subunit alpha (830 aa).

Residues M1 to G32 form the signal peptide. Residues V33–R240 are Extracellular-facing. C41 and C51 form a disulfide bridge. Residues N60 and N78 are each glycosylated (N-linked (GlcNAc...) asparagine). C82 and C94 are oxidised to a cystine. Residues N120, N142, and N170 are each glycosylated (N-linked (GlcNAc...) asparagine). Residues A133–Y232 form the Fibronectin type-III domain. Position 172 is a phosphoserine (S172). N-linked (GlcNAc...) asparagine glycosylation is found at N184 and N217. A WSXWS motif motif is present at residues W220–S224. A helical transmembrane segment spans residues L241–I264. At R265–S830 the chain is on the cytoplasmic side. A Box 1 motif motif is present at residues W270 to A278. The segment covering E378–D387 has biased composition (acidic residues). 2 disordered regions span residues E378–Q403 and M450–S488. The tract at residues E444–S564 is required for IRS1 activation and IL4-induced cell growth. Y504 carries the phosphotyrosine modification. Disordered regions lie at residues S508–Y610 and C623–K696. The segment covering G518–E534 has biased composition (acidic residues). Pro residues predominate over residues P538 to Q551. The required for IL4-induced gene expression stretch occupies residues S564 to L662. The span at A570–G582 shows a compositional bias: low complexity. Phosphotyrosine occurs at positions 583 and 610. The span at C623–E635 shows a compositional bias: polar residues. Y638 is modified (phosphotyrosine). 2 stretches are compositionally biased toward pro residues: residues P646–T655 and E665–P676. The short motif at I716–L721 is the ITIM motif element. Residues S811–S830 form a disordered region.

Belongs to the type I cytokine receptor family. Type 4 subfamily. As to quaternary structure, the functional IL4 receptor is formed by initial binding of IL4 to IL4R. Subsequent recruitment to the complex of the common gamma chain, in immune cells, creates a type I receptor and, in non-immune cells, of IL13RA1 forms a type II receptor. IL4R can also interact with the IL13/IL13RA1 complex to form a similar type II receptor. Interacts with PIK3C3. Interacts with the SH2-containing phosphatases, PTPN6/SHIP1, PTPN11/SHIP2 and INPP5D/SHIP. Interacts with JAK1 through a Box 1-containing region; inhibited by SOCS5. Interacts with SOCS5; inhibits IL4 signaling. Interacts with JAK3. Interacts with CLM1. Interacts with IL13RA2. In terms of processing, on IL4 binding, phosphorylated on C-terminal tyrosine residues.

It is found in the membrane. In terms of biological role, receptor for both interleukin 4 and interleukin 13. Couples to the JAK1/2/3-STAT6 pathway. The IL4 response is involved in promoting Th2 differentiation. The IL4/IL13 responses are involved in regulating IgE production and, chemokine and mucus production at sites of allergic inflammation. In certain cell types, can signal through activation of insulin receptor substrates, IRS1/IRS2. This chain is Interleukin-4 receptor subunit alpha (IL4R), found in Sus scrofa (Pig).